The following is a 155-amino-acid chain: Small ribosomal subunit protein uS7 (155 aa).

The protein belongs to the universal ribosomal protein uS7 family. Part of the 30S ribosomal subunit. Contacts proteins S9 and S11.

Its function is as follows. One of the primary rRNA binding proteins, it binds directly to 16S rRNA where it nucleates assembly of the head domain of the 30S subunit. Is located at the subunit interface close to the decoding center, probably blocks exit of the E-site tRNA. This is Small ribosomal subunit protein uS7 from Thermosipho africanus (strain TCF52B).